A 595-amino-acid polypeptide reads, in one-letter code: Apolipoprotein N-acyltransferase 2 (595 aa).

5 consecutive transmembrane segments (helical) span residues 30–50 (FLAFAPVSLTHFVWIAPFGFF), 63–83 (LFFHGLLIGVVFYAISFHWII), 95–115 (VVAILILLFAGLLFGLKFPIF), 167–187 (AEITGVYGISFLVFIVSYTLF), and 210–230 (FITLPALLLLTFIVSGIFLFK). The 315-residue stretch at 241–555 (LNVLIVQPDA…AEALSETIDV (315 aa)) folds into the CN hydrolase domain. Glu-293 serves as the catalytic Proton acceptor. Lys-372 is a catalytic residue. The active-site Nucleophile is Cys-463. Residues 569–589 (LIPWLMLFLTGIYYLNLLIGI) traverse the membrane as a helical segment.

It belongs to the CN hydrolase family. Apolipoprotein N-acyltransferase subfamily.

It localises to the cell inner membrane. It catalyses the reaction N-terminal S-1,2-diacyl-sn-glyceryl-L-cysteinyl-[lipoprotein] + a glycerophospholipid = N-acyl-S-1,2-diacyl-sn-glyceryl-L-cysteinyl-[lipoprotein] + a 2-acyl-sn-glycero-3-phospholipid + H(+). Its pathway is protein modification; lipoprotein biosynthesis (N-acyl transfer). Catalyzes the phospholipid dependent N-acylation of the N-terminal cysteine of apolipoprotein, the last step in lipoprotein maturation. The chain is Apolipoprotein N-acyltransferase 2 from Leptospira interrogans serogroup Icterohaemorrhagiae serovar Lai (strain 56601).